A 348-amino-acid polypeptide reads, in one-letter code: Dihydroorotase (348 aa).

Zn(2+)-binding residues include H17 and H19. Substrate is bound by residues 19-21 and N45; that span reads HLR. Residues K103, H140, and H178 each contribute to the Zn(2+) site. K103 is subject to N6-carboxylysine. Residue H140 coordinates substrate. L223 contributes to the substrate binding site. A Zn(2+)-binding site is contributed by D251. The active site involves D251. Substrate contacts are provided by H255 and A267.

It belongs to the metallo-dependent hydrolases superfamily. DHOase family. Class II DHOase subfamily. As to quaternary structure, homodimer. Zn(2+) is required as a cofactor.

The catalysed reaction is (S)-dihydroorotate + H2O = N-carbamoyl-L-aspartate + H(+). It participates in pyrimidine metabolism; UMP biosynthesis via de novo pathway; (S)-dihydroorotate from bicarbonate: step 3/3. Its function is as follows. Catalyzes the reversible cyclization of carbamoyl aspartate to dihydroorotate. The sequence is that of Dihydroorotase from Shigella flexneri.